We begin with the raw amino-acid sequence, 355 residues long: C-C chemokine receptor type 1 (355 aa).

Residues 1–34 (METPDTTENYDMITEFDYGDATPCHKVNERAILA) are Extracellular-facing. Residues 35–60 (QLLPPLYSLVFVIGVVGNLLVVLVLV) traverse the membrane as a helical segment. The Cytoplasmic segment spans residues 61–64 (QYKR). The chain crosses the membrane as a helical span at residues 65–91 (LKNMTNIYLLNLAISDLLFLFTLPFLI). The Extracellular portion of the chain corresponds to 92–107 (YYKSTDDWIFGDAMCK). C106 and C183 form a disulfide bridge. A helical transmembrane segment spans residues 108-129 (ILSGFYYTGLYSEIFFIILLTI). At 130–146 (DRYLAIVHAVFALRART) the chain is on the cytoplasmic side. A helical transmembrane segment spans residues 147–171 (VTFGVITSIIIWALAILASSPLMYF). The Extracellular segment spans residues 172-197 (SKTQWNIVRHSCNLHFPYESFQQWKL). A helical membrane pass occupies residues 198–223 (FQALKLNLFGLVLPLLVMIVCYTGII). At 224–239 (KILLRRPNEKKSKAVR) the chain is on the cytoplasmic side. A helical transmembrane segment spans residues 240–264 (LIFVIMIIFFLFWTPYNLTELISVF). Residues 265-281 (QEFLFTHLCEQNRQLDL) lie on the Extracellular side of the membrane. A helical transmembrane segment spans residues 282–305 (AMEVTEVIANMHCCVNPVIYAFAG). Over 306-355 (ERFRKYLRQLFHRRVAVHLVKWLPFLSGDRLERVSSTSPSTGEHELSAGL) the chain is Cytoplasmic.

This sequence belongs to the G-protein coupled receptor 1 family. In terms of assembly, interacts with CREB3. Interacts with CCL3. Interacts with CCL15. Interacts with CCL23. Interacts with GNAI1. Interacts with PF4/CXCL4.

It is found in the cell membrane. Functionally, chemokine receptor that plays a crucial role in regulating immune cell migration, inflammation, and immune responses. Contributes to the inflammatory response by recruiting immune cells, such as monocytes, macrophages, T-cells, and dendritic cells, to sites of inflammation for the clearance of pathogens and the resolution of tissue damage. When activated by its ligands including CCL3, CCL5-9, CCL13-16 and CCL23, triggers a signaling cascade within immune cells, leading to their migration towards the source of the chemokine. For example, mediates neutrophil migration after activation by CCL3 leading to the sequential release of TNF-alpha and leukotriene B4. Also mediates monocyte migration upon CXCL4 binding. Activation by CCL5 results in neuroinflammation through the ERK1/2 signaling pathway. The sequence is that of C-C chemokine receptor type 1 (CCR1) from Macaca fascicularis (Crab-eating macaque).